The sequence spans 211 residues: Potassium-transporting ATPase KdpC subunit (211 aa).

A helical membrane pass occupies residues V13–F35.

This sequence belongs to the KdpC family. The system is composed of three essential subunits: KdpA, KdpB and KdpC.

It is found in the cell inner membrane. Functionally, part of the high-affinity ATP-driven potassium transport (or Kdp) system, which catalyzes the hydrolysis of ATP coupled with the electrogenic transport of potassium into the cytoplasm. This subunit acts as a catalytic chaperone that increases the ATP-binding affinity of the ATP-hydrolyzing subunit KdpB by the formation of a transient KdpB/KdpC/ATP ternary complex. This is Potassium-transporting ATPase KdpC subunit from Myxococcus xanthus (strain DK1622).